The chain runs to 1032 residues: Suppression of tumorigenicity 18 protein (1032 aa).

Disordered regions lie at residues Arg29 to His76, Gly162 to Asn213, and Arg325 to Pro354. Residues Asn40–His51 show a composition bias toward basic residues. A compositionally biased stretch (basic and acidic residues) spans Tyr52–His76. CCHHC-type zinc fingers lie at residues Pro344 to Ile387, Leu388 to Met431, Arg700 to Leu743, Met744 to Met787, Glu792 to Asn835, and Lys845 to Val888. Zn(2+)-binding residues include Cys353, Cys358, His371, Cys377, Cys397, Cys402, His415, Cys421, Cys709, Cys714, His727, Cys733, Cys753, Cys758, His771, Cys777, Cys801, Cys806, His819, Cys825, Cys854, Cys859, His872, and Cys878. The stretch at Ile905 to Leu974 forms a coiled coil.

This sequence belongs to the MYT1 family. As to expression, detected in brain.

The protein localises to the nucleus. Functionally, repressor that binds to DNA sequences containing a bipartite element consisting of a direct repeat of the sequence 5'-AAAGTTT-3' separated by 2-9 nucleotides. Represses basal transcription activity from target promoters. The protein is Suppression of tumorigenicity 18 protein (St18) of Rattus norvegicus (Rat).